The chain runs to 283 residues: Pantothenate synthetase (283 aa).

30–37 lines the ATP pocket; the sequence is MGALHEGH. The active-site Proton donor is the His-37. Gln-61 is a binding site for (R)-pantoate. Gln-61 is a binding site for beta-alanine. Residue 147 to 150 participates in ATP binding; it reads GMKD. Residue Gln-153 participates in (R)-pantoate binding. Residues Val-176 and 184 to 187 each bind ATP; that span reads LSSR.

It belongs to the pantothenate synthetase family. In terms of assembly, homodimer.

The protein resides in the cytoplasm. It carries out the reaction (R)-pantoate + beta-alanine + ATP = (R)-pantothenate + AMP + diphosphate + H(+). It participates in cofactor biosynthesis; (R)-pantothenate biosynthesis; (R)-pantothenate from (R)-pantoate and beta-alanine: step 1/1. In terms of biological role, catalyzes the condensation of pantoate with beta-alanine in an ATP-dependent reaction via a pantoyl-adenylate intermediate. This chain is Pantothenate synthetase, found in Endomicrobium trichonymphae.